Here is a 61-residue protein sequence, read N- to C-terminus: Small ribosomal subunit protein uS14B (61 aa).

Cys-24, Cys-27, Cys-40, and Cys-43 together coordinate Zn(2+).

This sequence belongs to the universal ribosomal protein uS14 family. Zinc-binding uS14 subfamily. Part of the 30S ribosomal subunit. Contacts proteins S3 and S10. The cofactor is Zn(2+).

Binds 16S rRNA, required for the assembly of 30S particles and may also be responsible for determining the conformation of the 16S rRNA at the A site. The protein is Small ribosomal subunit protein uS14B of Ligilactobacillus salivarius (strain UCC118) (Lactobacillus salivarius).